Consider the following 168-residue polypeptide: Mitochondrial import inner membrane translocase subunit TIM14 (168 aa).

The segment covering 1 to 12 (MSSQSNTGNSIE) has biased composition (polar residues). Residues 1–29 (MSSQSNTGNSIEAPQLPIPGQTNGSANVT) are disordered. The Mitochondrial intermembrane portion of the chain corresponds to 1 to 65 (MSSQSNTGNS…QALNYMGEHP (65 aa)). Residues 66-83 (VITGFGAFLTLYFTAGAY) traverse the membrane as a helical segment. At 84 to 168 (KSISKGLNGG…DFLEKRGISK (85 aa)) the chain is on the mitochondrial matrix side. The J domain maps to 112 to 168 (EALQILNLTENTLTKKKLKEVHRKIMLANHPDKGGSPFLATKINEAKDFLEKRGISK).

Belongs to the TIM14 family. Homodimer and heterodimer with PAM16/TIM16. Homodimerization may not be relevant in vivo, while heterodimerization is essential for activity regulation of mtHSP70. Component of the PAM complex, at least composed of mtHsp70, MGE1, TIM44, PAM16, PAM17 and PAM18/TIM14. Interacts directly with mtHsp70. Interacts directly with TIM17 subunit of the TIM23 complex.

Its subcellular location is the mitochondrion inner membrane. Essential component of the PAM complex, a complex required for the translocation of transit peptide-containing proteins from the inner membrane into the mitochondrial matrix in an ATP-dependent manner. In the complex, it is required to stimulate activity of mtHSP70 (SSC1). This chain is Mitochondrial import inner membrane translocase subunit TIM14 (PAM18), found in Saccharomyces cerevisiae (strain ATCC 204508 / S288c) (Baker's yeast).